Here is a 185-residue protein sequence, read N- to C-terminus: TATA-box-binding protein (185 aa).

A run of 2 repeats spans residues 8–84 (IENI…VEML) and 99–175 (IQNM…LHEL).

This sequence belongs to the TBP family.

General factor that plays a role in the activation of archaeal genes transcribed by RNA polymerase. Binds specifically to the TATA box promoter element which lies close to the position of transcription initiation. In Thermococcus sibiricus (strain DSM 12597 / MM 739), this protein is TATA-box-binding protein.